The chain runs to 650 residues: MANCEGTERGDGDEDANRAGGWFLVEAIVEQTTGYQESSDEDENSEDRGEDLVDFIDTRSLGDGQEVPLDLFVQQNARDDAATVQALKRKYTCSPASSSCVSLVDSELSPRLDAISINRGHDRARRRLFDQDSGYGHTQVDIGAPESQVSGGTQHTKGGGGAVQEAEEERVGGDGEAQCSAQTQQTPERAADVLEIFKVSNLRVTLLHKFKELFGLAYGDLVRQFKSDKSICGDWVVCAFGVYHAVAEAVKTLIQPICLYAHIQIQTCQWGMVILMLVRYKCGKSRETVAHSMSTLLNIPEKQMLIEPPKIRSGPCALYWYRTAMGNGSEVYGETPEWIVRQTVVGHAMQETQFSLSTLVQWAYDNDITDESELAYDYAMLGNEDPNAAAFLASNCQAKYIKDAITMCKHYKRAEQARMSMTQWIAHRGRKVADSGDLREIVKYLRYQRVEFVTFMGALKLFLKGVPKKSCMVFYGPSDTGKSLFCMSLLKYLGGAVISYVNSGSHFWLSPLVDAKVGLLDDATYQCWQYIDTYLRTVLDGNAISIDRKHRNLTQLKCPPLMITTNINPLEDQAFKYLHSRIVLFKFMHKCPLKSNGDPVYTLNNENWKSFFQRSWARIEGPDEQEEEEDEDGSTSRPFRCVPGEIARPL.

The short motif at 88–90 (KRK) is the Nuclear localization signal element. A phosphoserine; by host mark is found at Ser94, Ser98, and Ser109. The Nuclear export signal motif lies at 108–117 (LSPRLDAISI). The tract at residues 134–184 (GYGHTQVDIGAPESQVSGGTQHTKGGGGAVQEAEEERVGGDGEAQCSAQTQ) is disordered. Residues 185-351 (QTPERAADVL…QTVVGHAMQE (167 aa)) form a DNA-binding region region. The SF3 helicase domain occupies 450–600 (VEFVTFMGAL…CPLKSNGDPV (151 aa)). An ATP-binding site is contributed by 476–483 (GPSDTGKS). Lys557 is covalently cross-linked (Glycyl lysine isopeptide (Lys-Gly) (interchain with G-Cter in SUMO)). Positions 620-650 (EGPDEQEEEEDEDGSTSRPFRCVPGEIARPL) are disordered. The span at 622-633 (PDEQEEEEDEDG) shows a compositional bias: acidic residues.

The protein belongs to the papillomaviridae E1 protein family. In terms of assembly, can form hexamers. Interacts with E2 protein; this interaction increases E1 DNA binding specificity. Interacts with host DNA polymerase subunit POLA2. Interacts with host single stranded DNA-binding protein RPA1. Interacts with host TOP1; this interaction stimulates the enzymatic activity of TOP1. In terms of processing, phosphorylated. Post-translationally, sumoylated.

The protein resides in the host nucleus. It catalyses the reaction Couples ATP hydrolysis with the unwinding of duplex DNA by translocating in the 3'-5' direction.. The enzyme catalyses ATP + H2O = ADP + phosphate + H(+). In terms of biological role, ATP-dependent DNA 3'-5' helicase required for initiation of viral DNA replication. It forms a complex with the viral E2 protein. The E1-E2 complex binds to the replication origin which contains binding sites for both proteins. During the initial step, a dimer of E1 interacts with a dimer of protein E2 leading to a complex that binds the viral origin of replication with high specificity. Then, a second dimer of E1 displaces the E2 dimer in an ATP-dependent manner to form the E1 tetramer. Following this, two E1 monomers are added to each half of the site, which results in the formation of two E1 trimers on the viral ori. Subsequently, two hexamers will be created. The double hexamer acts as a bi-directional helicase machinery and unwinds the viral DNA and then recruits the host DNA polymerase to start replication. This is Replication protein E1 from Homo sapiens (Human).